Reading from the N-terminus, the 443-residue chain is Aklavinone 7-beta-L-rhodosaminyltransferase (443 aa).

An N-terminal signal peptide occupies residues 1–23 (MRVLLTSFALDAHFNGSVPLAWA).

The protein belongs to the glycosyltransferase 28 family.

It carries out the reaction dTDP-beta-L-rhodosamine + aklavinone = aclacinomycin T + dTDP + 2 H(+). Its activity is regulated as follows. The activity of AknS is substantially increased by the addition of the accessory protein AknT. In terms of biological role, involved in the biosynthesis of the anthracycline antitumor agent aclacinomycin A. Catalyzes the transfer of the proximal deoxyhexose, L-rhodosamine, from dTDP-beta-L-rhodosamine to the C7-OH of aklavinone aglycone to yield aclacinomycin T (rhodosaminyl-aklavinone). It can also use dTDP-2-deoxy-beta-L-fucose, TDP-2-deoxyfucose, dTDP-4-amino-2-deoxyrhamnose, TDP-L-rhodosamine as sugar donor and epsilon-rhodomycinone as sugar acceptor. This chain is Aklavinone 7-beta-L-rhodosaminyltransferase, found in Streptomyces galilaeus.